The chain runs to 217 residues: Adenylate kinase (217 aa).

12–17 (GAGKGS) is a binding site for ATP. The NMP stretch occupies residues 32–61 (STGDMFRTHIKGSTPLGLEAKKYTDQGLLV). AMP is bound by residues threonine 33, arginine 38, 59-61 (LLV), 87-90 (GYPR), and glutamine 94. An LID region spans residues 128 to 165 (GRRTCPVCGAIYHVDNYPPKVAGICDNDGATLVQRKDD). Residue arginine 129 participates in ATP binding. The Zn(2+) site is built by cysteine 132 and cysteine 135. An ATP-binding site is contributed by 138–139 (IY). Residues cysteine 152 and aspartate 155 each contribute to the Zn(2+) site. AMP is bound by residues arginine 162 and arginine 173. An ATP-binding site is contributed by glutamine 201.

Belongs to the adenylate kinase family. Monomer.

The protein resides in the cytoplasm. It carries out the reaction AMP + ATP = 2 ADP. The protein operates within purine metabolism; AMP biosynthesis via salvage pathway; AMP from ADP: step 1/1. In terms of biological role, catalyzes the reversible transfer of the terminal phosphate group between ATP and AMP. Plays an important role in cellular energy homeostasis and in adenine nucleotide metabolism. This chain is Adenylate kinase, found in Acholeplasma laidlawii (strain PG-8A).